Here is a 512-residue protein sequence, read N- to C-terminus: Probable cytosol aminopeptidase (512 aa).

Residues Lys281 and Asp286 each coordinate Mn(2+). The active site involves Lys293. Residues Asp304, Asp363, and Glu365 each coordinate Mn(2+). Arg367 is a catalytic residue.

The protein belongs to the peptidase M17 family. It depends on Mn(2+) as a cofactor.

The protein resides in the cytoplasm. The enzyme catalyses Release of an N-terminal amino acid, Xaa-|-Yaa-, in which Xaa is preferably Leu, but may be other amino acids including Pro although not Arg or Lys, and Yaa may be Pro. Amino acid amides and methyl esters are also readily hydrolyzed, but rates on arylamides are exceedingly low.. It carries out the reaction Release of an N-terminal amino acid, preferentially leucine, but not glutamic or aspartic acids.. In terms of biological role, presumably involved in the processing and regular turnover of intracellular proteins. Catalyzes the removal of unsubstituted N-terminal amino acids from various peptides. This chain is Probable cytosol aminopeptidase, found in Koribacter versatilis (strain Ellin345).